Consider the following 341-residue polypeptide: Serpentine receptor class beta-1 (341 aa).

The next 7 helical transmembrane spans lie at Ala-22–Leu-42, Phe-66–Ile-86, Gly-102–Ile-122, Leu-141–Phe-161, Cys-188–Val-208, Leu-240–Ile-260, and Gly-279–Leu-299.

This sequence belongs to the nematode receptor-like protein srb family.

Its subcellular location is the membrane. This chain is Serpentine receptor class beta-1 (srb-1), found in Caenorhabditis elegans.